A 401-amino-acid polypeptide reads, in one-letter code: Enoyl-[acyl-carrier-protein] reductase [NADH] (401 aa).

NAD(+)-binding positions include 48 to 53 (GSSSGY), 74 to 75 (FE), 111 to 112 (DA), and 139 to 140 (LA). Residue Y225 participates in substrate binding. The Proton donor role is filled by Y235. NAD(+) is bound by residues K244 and 273–275 (VVT).

This sequence belongs to the TER reductase family. Monomer.

The enzyme catalyses a 2,3-saturated acyl-[ACP] + NAD(+) = a (2E)-enoyl-[ACP] + NADH + H(+). Its pathway is lipid metabolism; fatty acid biosynthesis. Functionally, involved in the final reduction of the elongation cycle of fatty acid synthesis (FAS II). Catalyzes the reduction of a carbon-carbon double bond in an enoyl moiety that is covalently linked to an acyl carrier protein (ACP). This Shewanella putrefaciens (strain CN-32 / ATCC BAA-453) protein is Enoyl-[acyl-carrier-protein] reductase [NADH].